The sequence spans 77 residues: Translation initiation factor IF-1, chloroplastic (77 aa).

Residues 1-71 enclose the S1-like domain; the sequence is MKEQKLIHEG…TRGRIIYRLR (71 aa).

It belongs to the IF-1 family. Component of the 30S ribosomal translation pre-initiation complex which assembles on the 30S ribosome in the order IF-2 and IF-3, IF-1 and N-formylmethionyl-tRNA(fMet); mRNA recruitment can occur at any time during PIC assembly.

The protein resides in the plastid. Its subcellular location is the chloroplast. Its function is as follows. One of the essential components for the initiation of protein synthesis. Stabilizes the binding of IF-2 and IF-3 on the 30S subunit to which N-formylmethionyl-tRNA(fMet) subsequently binds. Helps modulate mRNA selection, yielding the 30S pre-initiation complex (PIC). Upon addition of the 50S ribosomal subunit IF-1, IF-2 and IF-3 are released leaving the mature 70S translation initiation complex. The chain is Translation initiation factor IF-1, chloroplastic from Asarum canadense (Wild ginger).